We begin with the raw amino-acid sequence, 129 residues long: Small ribosomal subunit protein uS9 (129 aa).

The protein belongs to the universal ribosomal protein uS9 family.

The chain is Small ribosomal subunit protein uS9 (rpsI) from Treponema pallidum (strain Nichols).